A 1782-amino-acid chain; its full sequence is Signal-induced proliferation-associated 1-like protein 1 (1782 aa).

3 disordered regions span residues 1-28 (MTSLKRSQTERPVTADRASVVSTDGAPK), 47-125 (GSSV…VSLN), and 140-171 (KNKTGPAESMDSRFLMPEAYPSSPRKALRRIR). The span at 84–94 (PPRKENVKESS) shows a compositional bias: basic and acidic residues. Residues 95-125 (RSSQEIETSSCLESLSSKGSPVSQGSSVSLN) are compositionally biased toward low complexity. Residues Ser-162, Ser-187, Ser-193, Ser-208, Ser-255, and Ser-288 each carry the phosphoserine modification. The disordered stretch occupies residues 277 to 297 (EREKPLKRRSKSETGDSSIFR). The Rap-GAP domain occupies 599–816 (LMKLDEQGLN…RTRQEYLKDL (218 aa)). The PDZ domain occupies 953-1031 (EMTLRRNGLG…VVIIPPHDDC (79 aa)). 2 disordered regions span residues 1069–1128 (QRNA…RLSP) and 1144–1213 (SQCR…SLAD). Residues Ser-1078, Ser-1087, Ser-1116, Ser-1127, Ser-1149, Ser-1170, and Ser-1181 each carry the phosphoserine modification. The segment covering 1080-1093 (QVPSQLQSPMTSRL) has biased composition (polar residues). A compositionally biased stretch (low complexity) spans 1149–1159 (SPSNLSSSSET). The segment covering 1186-1205 (DRQNTQSDISGSGKSTPSWQ) has biased composition (polar residues). A phosphoserine mark is found at Ser-1234 and Ser-1249. The tract at residues 1247–1285 (HLSPNKQGHSDSHYSSHSSSNTLSSNASSAHSDEKWYDG) is disordered. A compositionally biased stretch (low complexity) spans 1261–1276 (SSHSSSNTLSSNASSA). Ser-1305 bears the Phosphoserine; by PLK2 mark. Residues 1307–1342 (IDTASYGPSHGSTASLGASTSSPRSGPGKEKVAPLW) form a disordered region. Thr-1309 is modified (phosphothreonine; by PLK2). Residues 1315-1328 (SHGSTASLGASTSS) are compositionally biased toward low complexity. Position 1328 is a phosphoserine; by CDK5 (Ser-1328). Ser-1345 bears the Phosphoserine mark. Residues 1358-1368 (TEGHGMDRKAE) are compositionally biased toward basic and acidic residues. Positions 1358–1454 (TEGHGMDRKA…SSSGPRTFYP (97 aa)) are disordered. 5 positions are modified to phosphoserine: Ser-1369, Ser-1370, Ser-1391, Ser-1410, and Ser-1412. The span at 1378-1410 (KSQGGSSPLSRENSTFSINDAASHTSTMSSRHS) shows a compositional bias: polar residues. Over residues 1432 to 1447 (SSQLAPSFSSSSSSSS) the composition is skewed to low complexity. A phosphoserine mark is found at Ser-1507 and Ser-1528. At Thr-1530 the chain carries Phosphothreonine. Residues Ser-1533, Ser-1544, Ser-1547, Ser-1564, and Ser-1567 each carry the phosphoserine modification. Arg-1580 is modified (asymmetric dimethylarginine). 9 positions are modified to phosphoserine: Ser-1582, Ser-1624, Ser-1626, Ser-1629, Ser-1687, Ser-1690, Ser-1707, Ser-1708, and Ser-1712. Residues 1625 to 1647 (ASDSSLTDIQETRRQPIPDPGLM) are disordered. A coiled-coil region spans residues 1713 to 1773 (PTLASKVDQL…ASDKLKKFTE (61 aa)).

Interacts with DLG4, PDLIM5, PDLIM7 and LZTS3. Interacts with the actin cytoskeleton. Interacts (via PDZ domain) with EPHA4 (via PDZ motif); controls neuronal morphology through regulation of the RAP1 (RAP1A or RAP1B) and RAP2 (RAP2A, RAP2B or RAP2C) GTPases. Ubiquitinated and degraded by the SCF(BTRC) following phosphorylation by PLK2. Post-translationally, phosphorylated at Ser-1328 by CDK5, creating a docking site for the POLO box domains of PLK2. Subsequently, PLK2 binds and phosphorylates SIPA1L1, leading to ubiquitination and degradation by the proteasome.

The protein resides in the cytoplasm. It is found in the cytoskeleton. It localises to the postsynaptic density. The protein localises to the synapse. Its subcellular location is the synaptosome. Stimulates the GTPase activity of RAP2A. Promotes reorganization of the actin cytoskeleton and recruits DLG4 to F-actin. Contributes to the regulation of dendritic spine morphogenesis. The sequence is that of Signal-induced proliferation-associated 1-like protein 1 (Sipa1l1) from Mus musculus (Mouse).